The chain runs to 220 residues: N-(5'-phosphoribosyl)anthranilate isomerase (220 aa).

The protein belongs to the TrpF family.

It catalyses the reaction N-(5-phospho-beta-D-ribosyl)anthranilate = 1-(2-carboxyphenylamino)-1-deoxy-D-ribulose 5-phosphate. The protein operates within amino-acid biosynthesis; L-tryptophan biosynthesis; L-tryptophan from chorismate: step 3/5. The sequence is that of N-(5'-phosphoribosyl)anthranilate isomerase from Xylella fastidiosa (strain 9a5c).